A 119-amino-acid chain; its full sequence is Large ribosomal subunit protein bL20 (119 aa).

It belongs to the bacterial ribosomal protein bL20 family.

In terms of biological role, binds directly to 23S ribosomal RNA and is necessary for the in vitro assembly process of the 50S ribosomal subunit. It is not involved in the protein synthesizing functions of that subunit. This is Large ribosomal subunit protein bL20 from Clostridium tetani (strain Massachusetts / E88).